We begin with the raw amino-acid sequence, 155 residues long: Regulatory protein RecX (155 aa).

The protein belongs to the RecX family.

It is found in the cytoplasm. Functionally, modulates RecA activity. The sequence is that of Regulatory protein RecX from Vibrio campbellii (strain ATCC BAA-1116).